We begin with the raw amino-acid sequence, 130 residues long: Small ribosomal subunit protein uS8 (130 aa).

Belongs to the universal ribosomal protein uS8 family. As to quaternary structure, part of the 30S ribosomal subunit. Contacts proteins S5 and S12.

One of the primary rRNA binding proteins, it binds directly to 16S rRNA central domain where it helps coordinate assembly of the platform of the 30S subunit. In Buchnera aphidicola subsp. Baizongia pistaciae (strain Bp), this protein is Small ribosomal subunit protein uS8.